The following is a 490-amino-acid chain: UDP-N-acetylmuramate--L-alanine ligase (490 aa).

126 to 132 (GTHGKTT) contacts ATP.

This sequence belongs to the MurCDEF family.

It is found in the cytoplasm. It carries out the reaction UDP-N-acetyl-alpha-D-muramate + L-alanine + ATP = UDP-N-acetyl-alpha-D-muramoyl-L-alanine + ADP + phosphate + H(+). It functions in the pathway cell wall biogenesis; peptidoglycan biosynthesis. Its function is as follows. Cell wall formation. In Sodalis glossinidius (strain morsitans), this protein is UDP-N-acetylmuramate--L-alanine ligase.